A 144-amino-acid polypeptide reads, in one-letter code: Cornifin-A (144 aa).

The interval 1–41 (MSSHQQKQPCTVPPQLHQQQVKQPCQPPPQEPCAPKTKDPC) is disordered. The segment covering 13 to 24 (PPQLHQQQVKQP) has biased composition (low complexity). 13 tandem repeats follow at residues 27–34 (PPPQEPCA), 35–42 (PKTKDPCH), 43–49 (PVPEPCN), 50–57 (PKGPEPCH), 58–65 (PKAPEPCH), 66–73 (PKAPEPCN), 74–81 (PKVPEPCQ), 82–89 (PKVPEPCQ), 90–97 (PKVPEPCN), 98–105 (PKVPEPCQ), 106–113 (PKAPEPCH), 114–121 (PKAPEPCH), and 122–129 (PVVPEPCP). A 13 X 8 AA approximate tandem repeats region spans residues 27 to 129 (PPPQEPCAPK…CHPVVPEPCP (103 aa)).

Belongs to the cornifin (SPRR) family. As to expression, expressed in fetal periderm, hair follicles and in the thickened epidermis of the lip and footpad. Also present in the epithelia of various tissues such as the penis, vagina, forestomach, tongue and esophagus.

The protein resides in the cytoplasm. In terms of biological role, cross-linked envelope protein of keratinocytes. It is a keratinocyte protein that first appears in the cell cytosol, but ultimately becomes cross-linked to membrane proteins by transglutaminase. All that results in the formation of an insoluble envelope beneath the plasma membrane. May participate widely in the construction of cell envelopes in cornifying epithelia characterized by either increased thickness or a requirement for extreme flexibility. This is Cornifin-A (Sprr1a) from Mus musculus (Mouse).